Here is a 299-residue protein sequence, read N- to C-terminus: Probable lipid kinase YegS (299 aa).

One can recognise a DAGKc domain in the interval 2-133; the sequence is ANFPASLLIL…IDMARVNDKT (132 aa). ATP is bound by residues T40, 66–72, and T95; that span reads GDGTINE. Mg(2+)-binding residues include L215, D218, and L220. E271 serves as the catalytic Proton acceptor.

The protein belongs to the diacylglycerol/lipid kinase family. YegS lipid kinase subfamily. Requires Mg(2+) as cofactor. Ca(2+) is required as a cofactor.

The protein localises to the cytoplasm. In terms of biological role, probably phosphorylates lipids; the in vivo substrate is unknown. The sequence is that of Probable lipid kinase YegS from Salmonella heidelberg (strain SL476).